A 327-amino-acid chain; its full sequence is GTP 3',8-cyclase (327 aa).

The 226-residue stretch at 7–232 (HHDRQFRYLR…IKRDRTAGPA (226 aa)) folds into the Radical SAM core domain. GTP is bound at residue arginine 16. The [4Fe-4S] cluster site is built by cysteine 23 and cysteine 27. Position 29 (tyrosine 29) interacts with S-adenosyl-L-methionine. Cysteine 30 is a [4Fe-4S] cluster binding site. Arginine 66 lines the GTP pocket. Residue glycine 70 coordinates S-adenosyl-L-methionine. Threonine 97 is a GTP binding site. Serine 121 serves as a coordination point for S-adenosyl-L-methionine. Lysine 158 lines the GTP pocket. Residue methionine 192 participates in S-adenosyl-L-methionine binding. Cysteine 255 and cysteine 258 together coordinate [4Fe-4S] cluster. 260–262 (RLR) provides a ligand contact to GTP. Cysteine 272 contributes to the [4Fe-4S] cluster binding site.

It belongs to the radical SAM superfamily. MoaA family. Monomer and homodimer. It depends on [4Fe-4S] cluster as a cofactor.

It catalyses the reaction GTP + AH2 + S-adenosyl-L-methionine = (8S)-3',8-cyclo-7,8-dihydroguanosine 5'-triphosphate + 5'-deoxyadenosine + L-methionine + A + H(+). Its pathway is cofactor biosynthesis; molybdopterin biosynthesis. Functionally, catalyzes the cyclization of GTP to (8S)-3',8-cyclo-7,8-dihydroguanosine 5'-triphosphate. The chain is GTP 3',8-cyclase from Synechococcus elongatus (strain ATCC 33912 / PCC 7942 / FACHB-805) (Anacystis nidulans R2).